Reading from the N-terminus, the 421-residue chain is Cyclin-A1 (421 aa).

The disordered stretch occupies residues 1 to 20 (MRRHSSKSGVALPPVGQGPD).

The protein belongs to the cyclin family. Cyclin AB subfamily. In terms of assembly, interacts with the CDK2 and the CDC2 protein kinases to form a serine/threonine kinase holoenzyme complex. The cyclin subunit imparts substrate specificity to the complex. Does not bind CDK4 and CDK5 (in vitro). The cyclin A1-CDK2 complex interacts with transcription factor E2F-1 and RB proteins. Found in a complex with CDK2, CABLES1 and CCNE1. Interacts with INCA1 and KLHDC9. Polyubiquitinated via 'Lys-11'-linked ubiquitin by the anaphase-promoting complex (APC/C), leading to its degradation by the proteasome. Deubiquitinated and stabilized by USP37 enables entry into S phase. Ubiquitinated during the G1 phase by the SCF(FBXO31) complex, leading to its proteasomal degradation.

It is found in the nucleus. Functionally, may be involved in the control of the cell cycle at the G1/S (start) and G2/M (mitosis) transitions. May primarily function in the control of the germline meiotic cell cycle and additionally in the control of mitotic cell cycle in some somatic cells. The sequence is that of Cyclin-A1 (Ccna1) from Rattus norvegicus (Rat).